The chain runs to 617 residues: D-glucuronyl C5-epimerase (617 aa).

The Cytoplasmic portion of the chain corresponds to 1–11 (MRCLAARVNYK). The chain crosses the membrane as a helical; Signal-anchor for type II membrane protein span at residues 12-28 (TLIIICALFTLVTVLLW). The Lumenal segment spans residues 29–617 (NKCSSDKAIQ…YLKGSRAKHN (589 aa)). Residues Y179, 184 to 186 (RDR), Q201, Y209, Q212, and Q215 contribute to the substrate site. Ca(2+)-binding residues include T237, E239, T268, N269, and D392. Substrate contacts are provided by residues 429 to 432 (KLGE), 499 to 500 (EY), N510, Y514, Y560, R563, and 572 to 581 (NLARWDYHTT).

It belongs to the D-glucuronyl C5-epimerase family. In terms of assembly, homodimer. Interacts with HS2ST1.

The protein localises to the golgi apparatus membrane. The catalysed reaction is [heparosan-N-sulfate](n) = [heparan-N-sulfate](n). Its pathway is glycan metabolism; heparan sulfate biosynthesis. It participates in glycan metabolism; heparin biosynthesis. Functionally, converts D-glucuronic acid residues adjacent to N-sulfate sugar residues to L-iduronic acid residues, both in maturing heparan sulfate (HS) and heparin chains. This is important for further modifications that determine the specificity of interactions between these glycosaminoglycans and proteins. This chain is D-glucuronyl C5-epimerase (GLCE), found in Bos taurus (Bovine).